We begin with the raw amino-acid sequence, 114 residues long: Probable 4-amino-4-deoxy-L-arabinose-phosphoundecaprenol flippase subunit ArnE (114 aa).

The next 3 membrane-spanning stretches (helical) occupy residues 41–61 (MWLW…LLVL), 64–84 (MDVG…TLVG), and 91–111 (PVDP…FQLG).

It belongs to the ArnE family. As to quaternary structure, heterodimer of ArnE and ArnF.

The protein localises to the cell inner membrane. Its pathway is bacterial outer membrane biogenesis; lipopolysaccharide biosynthesis. In terms of biological role, translocates 4-amino-4-deoxy-L-arabinose-phosphoundecaprenol (alpha-L-Ara4N-phosphoundecaprenol) from the cytoplasmic to the periplasmic side of the inner membrane. The chain is Probable 4-amino-4-deoxy-L-arabinose-phosphoundecaprenol flippase subunit ArnE from Pseudomonas savastanoi pv. phaseolicola (strain 1448A / Race 6) (Pseudomonas syringae pv. phaseolicola (strain 1448A / Race 6)).